A 309-amino-acid chain; its full sequence is Voltage-dependent anion channel-forming protein mll4386 (309 aa).

The next 3 helical transmembrane spans lie at 32–52 (ILPQIFGFAVYSAVILALARW), 58–78 (GVFNITPFGLVGVTLSIYLSF), and 227–247 (IVCLLLPIGLISTTGWATPLF).

This sequence belongs to the anion channel-forming bestrophin (TC 1.A.46) family.

Its subcellular location is the cell membrane. This Mesorhizobium japonicum (strain LMG 29417 / CECT 9101 / MAFF 303099) (Mesorhizobium loti (strain MAFF 303099)) protein is Voltage-dependent anion channel-forming protein mll4386.